The following is a 538-amino-acid chain: Sterile alpha motif domain-containing protein 1 (538 aa).

Residues 1–11 (MAGPPALPPPE) are compositionally biased toward pro residues. Disordered regions lie at residues 1–30 (MAGP…ASPH) and 92–247 (SYRN…GAAR). The segment covering 12-29 (TAAAATTAAAASSSAASP) has biased composition (low complexity). Residues 23 to 99 (SSSAASPHYQ…SISYRNAARV (77 aa)) form the SAMD1-like winged helix (WH) domain. Phosphothreonine is present on Thr107. Residues 115–125 (PRGAPAAAAAA) are compositionally biased toward low complexity. The span at 126-139 (APPPTPAPPPPPAP) shows a compositional bias: pro residues. Over residues 140 to 158 (VAAAAPARAPRAAAAAATA) the composition is skewed to low complexity. Ser161 is modified (phosphoserine). The span at 168 to 177 (GPRAQRAAPL) shows a compositional bias: low complexity. Pro residues predominate over residues 178–236 (AAPPPAPAAPPAVAPPAGPRRAPPPAVAAREPPLPPPPQPPAPPQQQQPPPPQPQPPPE). Residues 237-247 (GGAVRAGGAAR) show a composition bias toward low complexity. Residue Ser261 is modified to Phosphoserine. Residues 282–291 (AARGRLERTR) are compositionally biased toward basic and acidic residues. Residues 282-458 (AARGRLERTR…PPGRKEKPSD (177 aa)) are disordered. The segment covering 328-351 (KEEEEDDDEDEDEEDDVSEGSEVP) has biased composition (acidic residues). Residues 425–436 (SPSPVPLPPGKP) show a composition bias toward pro residues. The 69-residue stretch at 462-530 (WTVMDVVEYF…KVLQQGHFED (69 aa)) folds into the SAM domain.

In terms of assembly, homopolymerize into a closed pentameric ring. Interacts (via SAM domain) with L3MBTL3 (via SAM domain); the interaction mediates L3MBTL3 binding to chromatin. Interacts (via WH domain) with KDM1A; the interaction modulates KDM1A function. In terms of tissue distribution, expressed in atherosclerotic lesions, not in normal intima. Expressed in foam cells.

The protein resides in the nucleus. Its subcellular location is the chromosome. It localises to the secreted. Functionally, unmethylated CpG islands (CGIs)-binding protein which localizes to H3K4me3-decorated CGIs, where it acts as a transcriptional repressor. Tethers L3MBTL3 to chromatin and interacts with the KDM1A histone demethylase complex to modulate H3K4me2 and H3K4me3 levels at CGIs. Plays a role in atherogenesis by binding with LDL on cell surface and promoting LDL oxidation which leads to the formation of foam cell. The polypeptide is Sterile alpha motif domain-containing protein 1 (Homo sapiens (Human)).